We begin with the raw amino-acid sequence, 100 residues long: Integration host factor subunit alpha (100 aa).

The tract at residues 53–72 (FDLRDKRQRPGRNPKTGEEI) is disordered.

This sequence belongs to the bacterial histone-like protein family. In terms of assembly, heterodimer of an alpha and a beta chain.

In terms of biological role, this protein is one of the two subunits of integration host factor, a specific DNA-binding protein that functions in genetic recombination as well as in transcriptional and translational control. The chain is Integration host factor subunit alpha from Stutzerimonas stutzeri (strain A1501) (Pseudomonas stutzeri).